We begin with the raw amino-acid sequence, 584 residues long: Tricyclene synthase 1e20, chloroplastic (584 aa).

The transit peptide at 1–45 directs the protein to the chloroplast; it reads MIYIWICFYLQTTLLPCSLSTRTKFAICHNTSKLHRAAYKTSRWN. Residues Asn30, Asn209, and Asn322 are each glycosylated (N-linked (GlcNAc...) asparagine). Residues Asp341 and Asp345 each coordinate Mg(2+). A DDXXD motif motif is present at residues 341–345; the sequence is DDIFD. N-linked (GlcNAc...) asparagine glycosylation is found at Asn387 and Asn468. 3 residues coordinate Mg(2+): Asn485, Ser489, and Glu493. Asn512 carries N-linked (GlcNAc...) asparagine glycosylation.

Belongs to the terpene synthase family. Tpsg subfamily. Mg(2+) is required as a cofactor. Requires Mn(2+) as cofactor. Accumulates at low levels in flowers; mostly expressed in both upper and lower petal lobes, and, to a lower extent, in tube and stamens.

The protein localises to the plastid. The protein resides in the chloroplast stroma. The catalysed reaction is (2E)-geranyl diphosphate = tricyclene + diphosphate. It catalyses the reaction (2E)-geranyl diphosphate = beta-myrcene + diphosphate. Its pathway is secondary metabolite biosynthesis; terpenoid biosynthesis. Its function is as follows. May contribute to floral scent emission. This chain is Tricyclene synthase 1e20, chloroplastic (1e20), found in Antirrhinum majus (Garden snapdragon).